The following is a 515-amino-acid chain: Chromosomal replication initiator protein DnaA (515 aa).

Residues 1 to 89 (MVADQAVLSS…LLAISIDANL (89 aa)) are domain I, interacts with DnaA modulators. The segment at 89–172 (LQPPRTPSSE…APPSTSAETS (84 aa)) is domain II. Disordered stretches follow at residues 90-130 (QPPR…SRRA) and 142-171 (PPADVVPAANAAPNGNGKPTPAPPSTSAET). Low complexity-rich tracts occupy residues 102 to 114 (SSLAGGPSGAAAP) and 143 to 160 (PADVVPAANAAPNGNGKP). Residues 173 to 389 (RLNDRYHFET…GALIRVTAFA (217 aa)) form a domain III, AAA+ region region. Residues glycine 217, glycine 219, lysine 220, and threonine 221 each contribute to the ATP site. The domain IV, binds dsDNA stretch occupies residues 390 to 515 (SLNRQTVDIE…NEIKRKQRGA (126 aa)).

Belongs to the DnaA family. As to quaternary structure, oligomerizes as a right-handed, spiral filament on DNA at oriC.

It is found in the cytoplasm. In terms of biological role, plays an essential role in the initiation and regulation of chromosomal replication. ATP-DnaA binds to the origin of replication (oriC) to initiate formation of the DNA replication initiation complex once per cell cycle. Binds the DnaA box (a 9 base pair repeat at the origin) and separates the double-stranded (ds)DNA. Forms a right-handed helical filament on oriC DNA; dsDNA binds to the exterior of the filament while single-stranded (ss)DNA is stabiized in the filament's interior. The ATP-DnaA-oriC complex binds and stabilizes one strand of the AT-rich DNA unwinding element (DUE), permitting loading of DNA polymerase. After initiation quickly degrades to an ADP-DnaA complex that is not apt for DNA replication. Binds acidic phospholipids. This is Chromosomal replication initiator protein DnaA from Micrococcus luteus (strain ATCC 4698 / DSM 20030 / JCM 1464 / CCM 169 / CCUG 5858 / IAM 1056 / NBRC 3333 / NCIMB 9278 / NCTC 2665 / VKM Ac-2230) (Micrococcus lysodeikticus).